The sequence spans 167 residues: Peptidyl-prolyl cis-trans isomerase-like 3 (167 aa).

Residues 1–160 (MSVTLHTTLG…EEVRIERVTV (160 aa)) form the PPIase cyclophilin-type domain.

This sequence belongs to the cyclophilin-type PPIase family. PPIL3 subfamily.

It catalyses the reaction [protein]-peptidylproline (omega=180) = [protein]-peptidylproline (omega=0). Functionally, PPIases accelerate the folding of proteins. It catalyzes the cis-trans isomerization of proline imidic peptide bonds in oligopeptides. In Neurospora crassa (strain ATCC 24698 / 74-OR23-1A / CBS 708.71 / DSM 1257 / FGSC 987), this protein is Peptidyl-prolyl cis-trans isomerase-like 3 (cyp-10).